The chain runs to 128 residues: Small ribosomal subunit protein uS11 (128 aa).

It belongs to the universal ribosomal protein uS11 family. Part of the 30S ribosomal subunit. Interacts with proteins S7 and S18. Binds to IF-3.

In terms of biological role, located on the platform of the 30S subunit, it bridges several disparate RNA helices of the 16S rRNA. Forms part of the Shine-Dalgarno cleft in the 70S ribosome. The chain is Small ribosomal subunit protein uS11 from Solidesulfovibrio magneticus (strain ATCC 700980 / DSM 13731 / RS-1) (Desulfovibrio magneticus).